Reading from the N-terminus, the 263-residue chain is 4-hydroxy-2-oxo-heptane-1,7-dioate aldolase (263 aa).

The Proton acceptor role is filled by His45. Gln147 serves as a coordination point for substrate. Glu149 provides a ligand contact to a divalent metal cation. Substrate is bound by residues Ala174 and Asp175. Asp175 lines the a divalent metal cation pocket.

This sequence belongs to the HpcH/HpaI aldolase family. In terms of assembly, homohexamer; trimer of dimers. It depends on a divalent metal cation as a cofactor.

It catalyses the reaction 4-hydroxy-2-oxoheptanedioate = succinate semialdehyde + pyruvate. It participates in aromatic compound metabolism; 4-hydroxyphenylacetate degradation; pyruvate and succinate semialdehyde from 4-hydroxyphenylacetate: step 7/7. Its function is as follows. Catalyzes the reversible retro-aldol cleavage of 4-hydroxy-2-ketoheptane-1,7-dioate (HKHD) to pyruvate and succinic semialdehyde. This Salmonella heidelberg (strain SL476) protein is 4-hydroxy-2-oxo-heptane-1,7-dioate aldolase.